A 407-amino-acid polypeptide reads, in one-letter code: Arrestin domain-containing protein 2 (407 aa).

Belongs to the arrestin family. Interacts with WWP1 (via WW domains).

In Mus musculus (Mouse), this protein is Arrestin domain-containing protein 2 (Arrdc2).